A 388-amino-acid polypeptide reads, in one-letter code: Probable pectin lyase F-1 (388 aa).

The N-terminal stretch at 1-19 (MKTATFSTLLALSASAVNA) is a signal peptide. The cysteines at positions 80 and 103 are disulfide-linked. Residue asparagine 126 is glycosylated (N-linked (GlcNAc...) asparagine). Residue arginine 253 is part of the active site. Residues cysteine 328 and cysteine 336 are joined by a disulfide bond.

Belongs to the polysaccharide lyase 1 family.

The protein resides in the secreted. It catalyses the reaction Eliminative cleavage of (1-&gt;4)-alpha-D-galacturonan methyl ester to give oligosaccharides with 4-deoxy-6-O-methyl-alpha-D-galact-4-enuronosyl groups at their non-reducing ends.. Its function is as follows. Pectinolytic enzymes consist of four classes of enzymes: pectin lyase, polygalacturonase, pectin methylesterase and rhamnogalacturonase. Among pectinolytic enzymes, pectin lyase is the most important in depolymerization of pectin, since it cleaves internal glycosidic bonds of highly methylated pectins. The polypeptide is Probable pectin lyase F-1 (pelF-1) (Aspergillus terreus (strain NIH 2624 / FGSC A1156)).